Here is a 1493-residue protein sequence, read N- to C-terminus: Mitogen-activated protein kinase kinase kinase 1 (1493 aa).

2 stretches are compositionally biased toward low complexity: residues 1-23 (MAAA…ASPE) and 33-42 (GSGAPAAGAG). Disordered stretches follow at residues 1–171 (MAAA…DRPE) and 222–295 (LQGE…EETS). The residue at position 2 (A2) is an N-acetylalanine. S21 carries the phosphoserine modification. The segment covering 84 to 94 (PPCPSTSPSPE) has biased composition (pro residues). 2 stretches are compositionally biased toward low complexity: residues 95–108 (PADA…FQPA) and 135–151 (ARSP…APSG). Phosphoserine is present on S137. Positions 152 to 171 (REMENKETLKGLHKMDDRPE) are enriched in basic and acidic residues. Positions 230–257 (SAAPAPKGRRSPSPGSSPSGRSGKPESP) are enriched in low complexity. S265 is subject to Phosphoserine. A Phosphothreonine modification is found at T275. A phosphoserine mark is found at S282, S287, and S290. The SWIM-type zinc-finger motif lies at 328–356 (YRVFIGPQNCSCGRGTFCIHLLFVMLRVF). The segment at 433-482 (CPICLLGMLDEESLTVCEDGCRNKLHHHCMSIWAEECRRNREPLICPLCR) adopts an RING-type zinc-finger fold. Positions 496 to 506 (SSPVDSPTSLR) are enriched in polar residues. 4 disordered regions span residues 496–524 (SSPV…SQRR), 866–910 (DTLD…LSAS), 923–955 (VGLP…SPLS), and 992–1060 (PCKI…ASKN). Phosphoserine is present on residues S497, S521, and S910. Residues 507–522 (GVQQPSSPQQPVAGSQ) show a composition bias toward low complexity. Polar residues-rich tracts occupy residues 925 to 940 (LPSS…TVQT) and 998 to 1014 (ASPQ…QRTC). Residues S999 and S1024 each carry the phosphoserine modification. Residues 1049 to 1060 (GSTSKLGDASKN) show a composition bias toward polar residues. Residues 1224–1489 (WLKGQQIGLG…SRELLKHPVF (266 aa)) form the Protein kinase domain. Residues 1230 to 1238 (IGLGAFSSC) and K1253 each bind ATP. D1350 acts as the Proton acceptor in catalysis. Residues T1381 and T1393 each carry the phosphothreonine; by autocatalysis modification.

It belongs to the protein kinase superfamily. STE Ser/Thr protein kinase family. MAP kinase kinase kinase subfamily. In terms of assembly, binds both upstream activators and downstream substrates in multimolecular complexes through its N-terminus. Oligomerizes after binding MAP4K2 or TRAF2. Interacts (via the kinase catalytic domain) with STK38. Interacts with GRIPAP1. Mg(2+) serves as cofactor. In terms of processing, autophosphorylated. In terms of tissue distribution, most highly expressed in spleen, kidney and lung.

It is found in the membrane. The enzyme catalyses L-seryl-[protein] + ATP = O-phospho-L-seryl-[protein] + ADP + H(+). It catalyses the reaction L-threonyl-[protein] + ATP = O-phospho-L-threonyl-[protein] + ADP + H(+). Its activity is regulated as follows. Activated by autophosphorylation on Thr-1381 and Thr-1393 following oligomerization. Its function is as follows. Component of a protein kinase signal transduction cascade. Activates the ERK and JNK kinase pathways by phosphorylation of MAP2K1 and MAP2K4. May phosphorylate the MAPK8/JNK1 kinase. Activates CHUK and IKBKB, the central protein kinases of the NF-kappa-B pathway. This chain is Mitogen-activated protein kinase kinase kinase 1 (Map3k1), found in Rattus norvegicus (Rat).